Reading from the N-terminus, the 264-residue chain is Ribonuclease H (264 aa).

The segment at 55-88 (GSRYSSSSGPYRRSTTSYGYSPYSSSSSNYSARH) is disordered. Over residues 56 to 85 (SRYSSSSGPYRRSTTSYGYSPYSSSSSNYS) the composition is skewed to low complexity. Ser97 is subject to Phosphoserine. In terms of domain architecture, RNase H type-1 spans 120 to 263 (CSDRQVVYAD…ADMLARRGAS (144 aa)). Residues Asp129, Glu171, Asp191, and Asp255 each coordinate Mg(2+).

This sequence belongs to the RNase H family. It depends on Mg(2+) as a cofactor.

The enzyme catalyses Endonucleolytic cleavage to 5'-phosphomonoester.. In terms of biological role, endonuclease that specifically degrades the RNA of RNA-DNA hybrids. The polypeptide is Ribonuclease H (rnh1) (Schizosaccharomyces pombe (strain 972 / ATCC 24843) (Fission yeast)).